The sequence spans 400 residues: Elongation factor Tu (400 aa).

A tr-type G domain is found at 10–209 (KPHVNVGTIG…AVDSYIPTPE (200 aa)). Residues 19 to 26 (GHVDHGKT) are G1. A GTP-binding site is contributed by 19-26 (GHVDHGKT). Residue Thr26 coordinates Mg(2+). Residues 60 to 64 (GITIS) form a G2 region. A G3 region spans residues 81 to 84 (DCPG). Residues 81-85 (DCPGH) and 136-139 (NKAD) each bind GTP. The tract at residues 136 to 139 (NKAD) is G4. The tract at residues 174 to 176 (SGL) is G5.

This sequence belongs to the TRAFAC class translation factor GTPase superfamily. Classic translation factor GTPase family. EF-Tu/EF-1A subfamily. As to quaternary structure, monomer.

Its subcellular location is the cytoplasm. The enzyme catalyses GTP + H2O = GDP + phosphate + H(+). In terms of biological role, GTP hydrolase that promotes the GTP-dependent binding of aminoacyl-tRNA to the A-site of ribosomes during protein biosynthesis. The sequence is that of Elongation factor Tu from Desulfitobacterium hafniense (strain DSM 10664 / DCB-2).